The sequence spans 1872 residues: Plexin-A3 (1872 aa).

The N-terminal stretch at 1-19 (MHTVCLLPLLFFTIGGCLG) is a signal peptide. In terms of domain architecture, Sema spans 20 to 489 (SSRPFRTFVV…SEKQVSQLPV (470 aa)). At 20 to 1220 (SSRPFRTFVV…ITADRALTLP (1201 aa)) the chain is on the extracellular side. A glycan (N-linked (GlcNAc...) asparagine) is linked at N60. Intrachain disulfides connect C78/C87, C113/C121, C267/C388, C283/C339, C357/C376, C492/C509, C498/C540, C501/C518, and C512/C524. An N-linked (GlcNAc...) asparagine glycan is attached at N549. A disulfide bridge connects residues C575 and C595. 4 IPT/TIG domains span residues 841–934 (PRIT…YSFV), 936–1021 (PTLD…YTYT), 1024–1123 (PTVT…FTYY), and 1126–1212 (PSFE…LHIT). N-linked (GlcNAc...) asparagine glycosylation occurs at N1163. Residues 1221–1241 (AMVGLAAGGGLLLLAITVVLV) form a helical membrane-spanning segment. A coiled-coil region spans residues 1240 to 1294 (LVAYKRKTQDADRTLKRLQLQMDNLESRVALECKEAFAELQTDINELTNHMDGVQ). Residues 1242-1872 (AYKRKTQDAD…QIITLVSSSS (631 aa)) are Cytoplasmic-facing. Phosphoserine is present on S1597.

It belongs to the plexin family.

It localises to the cell membrane. Coreceptor for SEMA3A and SEMA3F. Necessary for signaling by class 3 semaphorins and subsequent remodeling of the cytoskeleton. Plays a role in axon guidance in the developing nervous system. Regulates the migration of sympathetic neurons, but not of neural crest precursors. Required for normal dendrite spine morphology in pyramidal neurons. May play a role in regulating semaphorin-mediated programmed cell death in the developing nervous system. Class 3 semaphorins bind to a complex composed of a neuropilin and a plexin. The plexin modulates the affinity of the complex for specific semaphorins, and its cytoplasmic domain is required for the activation of down-stream signaling events in the cytoplasm. The polypeptide is Plexin-A3 (Plxna3) (Rattus norvegicus (Rat)).